Reading from the N-terminus, the 274-residue chain is Probable WRKY transcription factor 49 (274 aa).

The WRKY DNA-binding region spans 108 to 173 (NSNGMCDDGY…YEGFHFHYTY (66 aa)). The segment at 188–228 (KTKIHKHNAQDMNKKSQTQEESKEAQLGELTNQNHPVNKAQ) is disordered. Positions 193–222 (KHNAQDMNKKSQTQEESKEAQLGELTNQNH) form a coiled coil. Over residues 195 to 213 (NAQDMNKKSQTQEESKEAQ) the composition is skewed to basic and acidic residues. Polar residues predominate over residues 216–228 (ELTNQNHPVNKAQ).

It belongs to the WRKY group II-c family.

Its subcellular location is the nucleus. In terms of biological role, transcription factor. Interacts specifically with the W box (5'-(T)TGAC[CT]-3'), a frequently occurring elicitor-responsive cis-acting element. This chain is Probable WRKY transcription factor 49 (WRKY49), found in Arabidopsis thaliana (Mouse-ear cress).